The sequence spans 304 residues: Nod factor export ATP-binding protein I (304 aa).

One can recognise an ABC transporter domain in the interval 6–236; sequence IDFRNVEKRF…EIGCDVIEIY (231 aa). 38–45 lines the ATP pocket; it reads GPNGAGKT.

It belongs to the ABC transporter superfamily. Lipooligosaccharide exporter (TC 3.A.1.102) family. The complex is composed of two ATP-binding proteins (NodI) and two transmembrane proteins (NodJ).

It is found in the cell inner membrane. Functionally, part of the ABC transporter complex NodIJ involved in the export of the nodulation factors (Nod factors), the bacterial signal molecules that induce symbiosis and subsequent nodulation induction. Nod factors are LCO (lipo-chitin oligosaccharide), a modified beta-1,4-linked N-acetylglucosamine oligosaccharide. This subunit is responsible for energy coupling to the transport system. The sequence is that of Nod factor export ATP-binding protein I from Burkholderia lata (strain ATCC 17760 / DSM 23089 / LMG 22485 / NCIMB 9086 / R18194 / 383).